Here is a 283-residue protein sequence, read N- to C-terminus: Non-selective voltage-gated ion channel VDAC3 (283 aa).

C2 carries the post-translational modification N-acetylcysteine. A Phosphothreonine modification is found at T4. An N6-acetyllysine mark is found at K12, K15, and K20. 2 beta stranded membrane-spanning segments follow: residues 26–35 (MVKIDLKTKS) and 39–47 (VEFSTSGHA). T33 bears the Phosphothreonine mark. K53 participates in a covalent cross-link: Glycyl lysine isopeptide (Lys-Gly) (interchain with G-Cter in ubiquitin). 3 consecutive transmembrane segments (beta stranded) span residues 54 to 64 (ASGNLETKYKV), 69 to 76 (LIFTQKWN), and 80 to 89 (TLGTEISWEN). K90 is modified (N6-acetyllysine). The beta stranded transmembrane segment at 95–104 (LKLTVDTIFV) threads the bilayer. Residues K109 and K110 each participate in a glycyl lysine isopeptide (Lys-Gly) (interchain with G-Cter in ubiquitin) cross-link. 10 consecutive transmembrane segments (beta stranded) span residues 111–120 (SGKLKASYRR), 123–130 (FSVGSKVD), 137–145 (TIYGWAVLA), 150–158 (LAGYQMSFD), 163–175 (KLCQ…GYKA), 178–185 (FQLHTHVN), 189–198 (EFGGSIYQRV), 202–211 (IETSINLAWT), 218–227 (RFGIAAKYRL), and 231–238 (TSLSAKVN). S241 carries the post-translational modification Phosphoserine. Residues 242-244 (LIG) and 260-264 (SALVD) each bind NAD(+). Transmembrane regions (beta stranded) follow at residues 242–251 (LIGLGYTQSL) and 254–263 (GVKLTLSALV). The residue at position 266 (K266) is an N6-acetyllysine; alternate. A Glycyl lysine isopeptide (Lys-Gly) (interchain with G-Cter in ubiquitin); alternate cross-link involves residue K266. Residues 273 to 282 (HKVGLGFELE) form a beta stranded membrane-spanning segment.

This sequence belongs to the eukaryotic mitochondrial porin family. Interacts with ARMC12 in a TBC1D21-dependent manner. Interacts with MISFA. In terms of processing, ubiquitinated by PRKN during mitophagy, leading to its degradation and enhancement of mitophagy. Deubiquitinated by USP30. In terms of tissue distribution, isoform 1 is widely expressed with strong expression in atrium and ascitic tumor, lower levels in brain and very low levels in liver and kidney. Isoform 2 is also widely expressed with highest levels in brain but no expression in kidney. Also expressed in flagella of epididymal sperm.

It localises to the mitochondrion outer membrane. It is found in the membrane. The enzyme catalyses chloride(in) = chloride(out). The catalysed reaction is K(+)(in) = K(+)(out). Functionally, non-selective voltage-gated ion channel that mediates the transport of anions and cations through the mitochondrion outer membrane and plasma membrane. Forms a high-conducting channel with a stable open state and a voltage-induced closure with a mild preference for anions over cations. Involved in male fertility and sperm mitochondrial sheath formation. The polypeptide is Non-selective voltage-gated ion channel VDAC3 (Rattus norvegicus (Rat)).